The primary structure comprises 387 residues: Queuine tRNA-ribosyltransferase (387 aa).

The Proton acceptor role is filled by aspartate 102. Substrate is bound by residues 102 to 106 (DSGGF), aspartate 156, glutamine 205, and glycine 232. The RNA binding stretch occupies residues 263 to 269 (GVGTPED). Aspartate 282 acts as the Nucleophile in catalysis. An RNA binding; important for wobble base 34 recognition region spans residues 287 to 291 (TRNAR). Positions 320, 322, 325, and 351 each coordinate Zn(2+).

It belongs to the queuine tRNA-ribosyltransferase family. In terms of assembly, homodimer. Within each dimer, one monomer is responsible for RNA recognition and catalysis, while the other monomer binds to the replacement base PreQ1. It depends on Zn(2+) as a cofactor.

It carries out the reaction 7-aminomethyl-7-carbaguanine + guanosine(34) in tRNA = 7-aminomethyl-7-carbaguanosine(34) in tRNA + guanine. Its pathway is tRNA modification; tRNA-queuosine biosynthesis. Catalyzes the base-exchange of a guanine (G) residue with the queuine precursor 7-aminomethyl-7-deazaguanine (PreQ1) at position 34 (anticodon wobble position) in tRNAs with GU(N) anticodons (tRNA-Asp, -Asn, -His and -Tyr). Catalysis occurs through a double-displacement mechanism. The nucleophile active site attacks the C1' of nucleotide 34 to detach the guanine base from the RNA, forming a covalent enzyme-RNA intermediate. The proton acceptor active site deprotonates the incoming PreQ1, allowing a nucleophilic attack on the C1' of the ribose to form the product. After dissociation, two additional enzymatic reactions on the tRNA convert PreQ1 to queuine (Q), resulting in the hypermodified nucleoside queuosine (7-(((4,5-cis-dihydroxy-2-cyclopenten-1-yl)amino)methyl)-7-deazaguanosine). The polypeptide is Queuine tRNA-ribosyltransferase (Polaromonas naphthalenivorans (strain CJ2)).